Consider the following 371-residue polypeptide: uncharacterized protein (371 aa).

A run of 8 helical transmembrane segments spans residues 4-24 (LPML…FIYG), 60-82 (LIQL…ALYG), 87-109 (LWIV…MLSI), 130-150 (VFIN…FVAS), 197-217 (VVAV…LLPV), 224-244 (IYPL…YGLV), 282-302 (VPIW…GFHA), and 320-340 (FIFY…CMVG).

Belongs to the peptide transporter carbon starvation (CstA) (TC 2.A.114) family.

It is found in the cell membrane. This is an uncharacterized protein from Haemophilus influenzae (strain ATCC 51907 / DSM 11121 / KW20 / Rd).